Reading from the N-terminus, the 541-residue chain is Glucose-6-phosphate isomerase (541 aa).

Glu347 acts as the Proton donor in catalysis. Active-site residues include His378 and Lys506.

The protein belongs to the GPI family.

Its subcellular location is the cytoplasm. The catalysed reaction is alpha-D-glucose 6-phosphate = beta-D-fructose 6-phosphate. It participates in carbohydrate biosynthesis; gluconeogenesis. The protein operates within carbohydrate degradation; glycolysis; D-glyceraldehyde 3-phosphate and glycerone phosphate from D-glucose: step 2/4. Functionally, catalyzes the reversible isomerization of glucose-6-phosphate to fructose-6-phosphate. This Francisella tularensis subsp. holarctica (strain OSU18) protein is Glucose-6-phosphate isomerase.